The primary structure comprises 422 residues: 5-hydroxytryptamine receptor 1A (422 aa).

A disordered region spans residues 1–23 (MDVLSPGQGNNTTSPPAPFETGG). Topologically, residues 1-38 (MDVLSPGQGNNTTSPPAPFETGGNTTGISDVTVSYQVI) are extracellular. N-linked (GlcNAc...) asparagine glycans are attached at residues Asn10, Asn11, and Asn24. Residues 39 to 59 (TSLLLGTLIFCAVLGNACVVA) form a helical membrane-spanning segment. Residues 60–73 (AIALERSLQNVANY) are Cytoplasmic-facing. Residues 74–98 (LIGSLAVTDLMVSVLVLPMAALYQV) form a helical membrane-spanning segment. Topologically, residues 99–107 (LNKWTLGQV) are extracellular. Residues 108–132 (TCDLFIALDVLCCTSSILHLCAIAL) traverse the membrane as a helical segment. Cysteines 109 and 187 form a disulfide. Residues Asp116 and Cys120 each contribute to the serotonin site. Residues 133-135 (DRY) carry the DRY motif; important for ligand-induced conformation changes motif. Residues 133–152 (DRYWAITDPIDYVNKRTPRR) lie on the Cytoplasmic side of the membrane. The chain crosses the membrane as a helical span at residues 153 to 174 (AAALISLTWLIGFLISIPPMLG). Over 175 to 193 (WRTPEDRSDPDACTISKDH) the chain is Extracellular. The helical transmembrane segment at 194-216 (GYTIYSTFGAFYIPLLLMLVLYG) threads the bilayer. Residues 217–346 (RIFRAARFRI…LARERKTVKT (130 aa)) are Cytoplasmic-facing. The disordered stretch occupies residues 235 to 262 (KTGADTRHGASPAPQPKKSVNGESGSRN). Positions 314, 345, 346, and 352 each coordinate 1D-myo-inositol 4-phosphate. A helical membrane pass occupies residues 347 to 370 (LGIIMGTFILCWLPFFIVALVLPF). At 371 to 378 (CESSCHMP) the chain is on the extracellular side. Residues 379 to 403 (TLLGAIINWLGYSNSLLNPVIYAYF) form a helical membrane-spanning segment. An NPxxY motif; important for ligand-induced conformation changes and signaling motif is present at residues 396 to 400 (NPVIY). Residues Phe403, Asn404, and Lys405 each contribute to the 1D-myo-inositol 4-phosphate site. Topologically, residues 404-422 (NKDFQNAFKKIIKCKFCRQ) are cytoplasmic.

The protein belongs to the G-protein coupled receptor 1 family. 5-hydroxytryptamine receptor subfamily. HTR1A sub-subfamily. In terms of assembly, heterodimer; heterodimerizes with GPER1. Interacts with YIF1B. Interacts with GPR39 and GALR1. In terms of tissue distribution, detected in lymph nodes, thymus and spleen. Detected in activated T-cells, but not in resting T-cells.

It is found in the cell membrane. Its subcellular location is the cell projection. The protein resides in the dendrite. G-protein coupled receptor activity is regulated by lipids: phosphatidylinositol 4-phosphate increases HTR1A-mediated activity. Binding to aripiprazol drug is regulated by cholesterol, which shapes the ligand-binding pocket, determining the specificity for aripiprazol. Activated by IHCH-7179 small molecule: IHCH-7179 acts both as an agonist activator for HTR1A and as an antagonist inhibitor for HTR2A. Activated by SEP-363856 small molecule: IHCH-7179 acts both as an agonist activator for HTR1A and TAAR1. In terms of biological role, G-protein coupled receptor for 5-hydroxytryptamine (serotonin). Also functions as a receptor for various drugs and psychoactive substances. Ligand binding causes a conformation change that triggers signaling via guanine nucleotide-binding proteins (G proteins) and modulates the activity of downstream effectors, such as adenylate cyclase. HTR1A is coupled to G(i)/G(o) G alpha proteins and mediates inhibitory neurotransmission: signaling inhibits adenylate cyclase activity and activates a phosphatidylinositol-calcium second messenger system that regulates the release of Ca(2+) ions from intracellular stores. Beta-arrestin family members regulate signaling by mediating both receptor desensitization and resensitization processes. Plays a role in the regulation of 5-hydroxytryptamine release and in the regulation of dopamine and 5-hydroxytryptamine metabolism. Plays a role in the regulation of dopamine and 5-hydroxytryptamine levels in the brain, and thereby affects neural activity, mood and behavior. Plays a role in the response to anxiogenic stimuli. This is 5-hydroxytryptamine receptor 1A from Homo sapiens (Human).